Here is a 466-residue protein sequence, read N- to C-terminus: 3-isopropylmalate dehydratase large subunit (466 aa).

Residues Cys-347, Cys-407, and Cys-410 each contribute to the [4Fe-4S] cluster site.

The protein belongs to the aconitase/IPM isomerase family. LeuC type 1 subfamily. Heterodimer of LeuC and LeuD. It depends on [4Fe-4S] cluster as a cofactor.

It catalyses the reaction (2R,3S)-3-isopropylmalate = (2S)-2-isopropylmalate. The protein operates within amino-acid biosynthesis; L-leucine biosynthesis; L-leucine from 3-methyl-2-oxobutanoate: step 2/4. Catalyzes the isomerization between 2-isopropylmalate and 3-isopropylmalate, via the formation of 2-isopropylmaleate. This Enterobacter sp. (strain 638) protein is 3-isopropylmalate dehydratase large subunit.